The chain runs to 584 residues: Proteasome-associated ATPase (584 aa).

Positions 8 to 90 (RHAERDRDEL…KEEVDRLSQP (83 aa)) form a coiled coil. 272-277 (GCGKTL) is a binding site for ATP. Positions 583-584 (YL) are docks into pockets in the proteasome alpha-ring.

It belongs to the AAA ATPase family. In terms of assembly, homohexamer. Assembles into a hexameric ring structure that caps the 20S proteasome core. Strongly interacts with the prokaryotic ubiquitin-like protein Pup through a hydrophobic interface; the interacting region of ARC lies in its N-terminal coiled-coil domain. There is one Pup binding site per ARC hexamer ring. Upon ATP-binding, the C-terminus of ARC interacts with the alpha-rings of the proteasome core, possibly by binding to the intersubunit pockets.

Its pathway is protein degradation; proteasomal Pup-dependent pathway. In terms of biological role, ATPase which is responsible for recognizing, binding, unfolding and translocation of pupylated proteins into the bacterial 20S proteasome core particle. May be essential for opening the gate of the 20S proteasome via an interaction with its C-terminus, thereby allowing substrate entry and access to the site of proteolysis. Thus, the C-termini of the proteasomal ATPase may function like a 'key in a lock' to induce gate opening and therefore regulate proteolysis. The sequence is that of Proteasome-associated ATPase from Thermobifida fusca (strain YX).